Here is a 402-residue protein sequence, read N- to C-terminus: 1-deoxy-D-xylulose 5-phosphate reductoisomerase (402 aa).

NADPH is bound by residues threonine 13, glycine 14, serine 15, isoleucine 16, and asparagine 126. Lysine 127 lines the 1-deoxy-D-xylulose 5-phosphate pocket. Residue glutamate 128 participates in NADPH binding. Position 152 (aspartate 152) interacts with Mn(2+). Positions 153, 154, 188, and 211 each coordinate 1-deoxy-D-xylulose 5-phosphate. Glutamate 154 serves as a coordination point for Mn(2+). NADPH is bound at residue glycine 217. The 1-deoxy-D-xylulose 5-phosphate site is built by serine 224, asparagine 229, lysine 230, and glutamate 233. Residue glutamate 233 participates in Mn(2+) binding.

This sequence belongs to the DXR family. It depends on Mg(2+) as a cofactor. The cofactor is Mn(2+).

It catalyses the reaction 2-C-methyl-D-erythritol 4-phosphate + NADP(+) = 1-deoxy-D-xylulose 5-phosphate + NADPH + H(+). It participates in isoprenoid biosynthesis; isopentenyl diphosphate biosynthesis via DXP pathway; isopentenyl diphosphate from 1-deoxy-D-xylulose 5-phosphate: step 1/6. Functionally, catalyzes the NADPH-dependent rearrangement and reduction of 1-deoxy-D-xylulose-5-phosphate (DXP) to 2-C-methyl-D-erythritol 4-phosphate (MEP). The sequence is that of 1-deoxy-D-xylulose 5-phosphate reductoisomerase from Psychrobacter arcticus (strain DSM 17307 / VKM B-2377 / 273-4).